The following is an 82-amino-acid chain: Beta-insect depressant toxin LqqIT2 (82 aa).

The signal sequence occupies residues 1–21 (MKLLLLLIVSASMLIESLVNA). An LCN-type CS-alpha/beta domain is found at 22 to 82 (DGYIRKRDGC…TWKSETNTCG (61 aa)). Disulfide bonds link Cys31/Cys81, Cys35/Cys56, Cys42/Cys63, and Cys46/Cys65.

This sequence belongs to the long (4 C-C) scorpion toxin superfamily. Sodium channel inhibitor family. Beta subfamily. As to expression, expressed by the venom gland.

It localises to the secreted. Its function is as follows. Depressant insect beta-toxins cause a transient contraction paralysis followed by a slow flaccid paralysis. They bind voltage-independently at site-4 of sodium channels and shift the voltage of activation toward more negative potentials thereby affecting sodium channel activation and promoting spontaneous and repetitive firing. Aside from typical beta-toxin effects, this toxin also affects the inactivation process and ion selectivity of the insect voltage-gated sodium channel. This toxin is active only on insects. Is active on the insect voltage-gated sodium channel para. In vivo, when injected intraperitoneally, it exhibits analgesic activity, increasing hot plate and tail flick withdrawal latencies in a dose-dependent fashion. This phenomenon might be partly due to an inhibitory mechanism activated by noxious stimuli. This chain is Beta-insect depressant toxin LqqIT2, found in Leiurus quinquestriatus quinquestriatus (Egyptian scorpion).